A 96-amino-acid polypeptide reads, in one-letter code: Large ribosomal subunit protein bL28 (96 aa).

This sequence belongs to the bacterial ribosomal protein bL28 family.

The polypeptide is Large ribosomal subunit protein bL28 (Orientia tsutsugamushi (strain Boryong) (Rickettsia tsutsugamushi)).